The following is a 242-amino-acid chain: Uridylate kinase (242 aa).

Residue 11 to 14 (KLSG) coordinates ATP. A UMP-binding site is contributed by glycine 53. 2 residues coordinate ATP: glycine 54 and arginine 58. Residues aspartate 73 and 134–141 (SGNPFFTT) each bind UMP. The ATP site is built by threonine 161, tyrosine 167, and aspartate 170.

This sequence belongs to the UMP kinase family. Homohexamer.

The protein localises to the cytoplasm. The enzyme catalyses UMP + ATP = UDP + ADP. It participates in pyrimidine metabolism; CTP biosynthesis via de novo pathway; UDP from UMP (UMPK route): step 1/1. Its activity is regulated as follows. Inhibited by UTP. Functionally, catalyzes the reversible phosphorylation of UMP to UDP. In Thermosynechococcus vestitus (strain NIES-2133 / IAM M-273 / BP-1), this protein is Uridylate kinase.